A 210-amino-acid chain; its full sequence is MADS-box protein AGL42 (210 aa).

Positions 1–61 constitute an MADS-box domain; sequence MVRGKIEMKK…GRLYEFSSSD (61 aa). The K-box domain occupies 87 to 177; it reads LQQLKQEASH…HQKNVINPWR (91 aa).

As to expression, expressed in quiescent center (QC) cells of root tips. Expressed at the base of the petiole of cotyledons and leaves, in flower buds, petals, sepals and abscission zone of flowers and siliques.

It is found in the nucleus. Functionally, MADS-box transcription factor that acts with AGL71 and AGL72 in the control of flowering time. Promotes flowering at the shoot apical and axillary meristems. Seems to act through a gibberellin-dependent pathway. Interacts genetically with SOC1 and its expression is directly regulated by SOC1. Plays a role in controlling flower organ senescence and abscission by repressing ethylene responses and regulating the expression of BOP2 and IDA. This Arabidopsis thaliana (Mouse-ear cress) protein is MADS-box protein AGL42 (AGL42).